A 63-amino-acid chain; its full sequence is Large ribosomal subunit protein bL28 (63 aa).

This sequence belongs to the bacterial ribosomal protein bL28 family.

The protein is Large ribosomal subunit protein bL28 of Petrotoga mobilis (strain DSM 10674 / SJ95).